Reading from the N-terminus, the 508-residue chain is MKILFATSECAPLVKTGGLGDVSAALPPAIAALGHEVMLLMPAYADMPLQGNITGWHSLPAEGPWPAAQLLRVDRGGHEVPLLLLSCPQLYARGGSPYASAQGDHPDNALRFGLLAHVAARIGTPQSPCGWTADIVHANDWPTALAPLYLRQFRDAAGPRGDAVARSMVTVHNLAFQGVFPMDWAQRLGIEDRHLGIEGAEFWGQLSMLKAGLQYADAITTVSPTYAREIQTPELGFGLDGVLRARAGRLQGILNGIDTALWNPSQDTLIPAPFSADRLEGKAACKAALRRTLGLAQDGDRMLFGLVGRMTEQKGIDWVIGGAERLLRQGGQLAILGSGDPALESALRALAKRHPRHMHVTVGFDESLAHGIEAGSDSFLMPSRFEPCGLNQMYSQAYGTPPVVTPTGGLADSVTDADDPAGNGTGFVLRGSSQAAFDQAVGRALHLWKTAPDAWRRLQRNGMQRDFGWTASARAYVQAYGAARNRAETRPQTASALSYREPRPAAEY.

Lysine 15 serves as a coordination point for ADP-alpha-D-glucose. Residues 483-508 (ARNRAETRPQTASALSYREPRPAAEY) form a disordered region.

It belongs to the glycosyltransferase 1 family. Bacterial/plant glycogen synthase subfamily.

It carries out the reaction [(1-&gt;4)-alpha-D-glucosyl](n) + ADP-alpha-D-glucose = [(1-&gt;4)-alpha-D-glucosyl](n+1) + ADP + H(+). It functions in the pathway glycan biosynthesis; glycogen biosynthesis. Its function is as follows. Synthesizes alpha-1,4-glucan chains using ADP-glucose. This Paracidovorax citrulli (strain AAC00-1) (Acidovorax citrulli) protein is Glycogen synthase.